Here is a 226-residue protein sequence, read N- to C-terminus: 2-C-methyl-D-erythritol 4-phosphate cytidylyltransferase (226 aa).

It belongs to the IspD/TarI cytidylyltransferase family. IspD subfamily.

It catalyses the reaction 2-C-methyl-D-erythritol 4-phosphate + CTP + H(+) = 4-CDP-2-C-methyl-D-erythritol + diphosphate. It participates in isoprenoid biosynthesis; isopentenyl diphosphate biosynthesis via DXP pathway; isopentenyl diphosphate from 1-deoxy-D-xylulose 5-phosphate: step 2/6. Catalyzes the formation of 4-diphosphocytidyl-2-C-methyl-D-erythritol from CTP and 2-C-methyl-D-erythritol 4-phosphate (MEP). This Bacillus cytotoxicus (strain DSM 22905 / CIP 110041 / 391-98 / NVH 391-98) protein is 2-C-methyl-D-erythritol 4-phosphate cytidylyltransferase.